The chain runs to 952 residues: Glycine dehydrogenase (decarboxylating) (952 aa).

Lys-703 carries the N6-(pyridoxal phosphate)lysine modification.

The protein belongs to the GcvP family. As to quaternary structure, the glycine cleavage system is composed of four proteins: P, T, L and H. Pyridoxal 5'-phosphate is required as a cofactor.

The enzyme catalyses N(6)-[(R)-lipoyl]-L-lysyl-[glycine-cleavage complex H protein] + glycine + H(+) = N(6)-[(R)-S(8)-aminomethyldihydrolipoyl]-L-lysyl-[glycine-cleavage complex H protein] + CO2. The glycine cleavage system catalyzes the degradation of glycine. The P protein binds the alpha-amino group of glycine through its pyridoxal phosphate cofactor; CO(2) is released and the remaining methylamine moiety is then transferred to the lipoamide cofactor of the H protein. This chain is Glycine dehydrogenase (decarboxylating), found in Mycobacterium leprae (strain Br4923).